Here is a 501-residue protein sequence, read N- to C-terminus: Protein YLS7 (501 aa).

The helical; Signal-anchor for type II membrane protein transmembrane segment at 25–45 (IAFAIGGLTSFVIFASLLLFT) threads the bilayer. The tract at residues 69–131 (HSIHDPDRNP…NVSIDEEATQ (63 aa)) is disordered. A compositionally biased stretch (low complexity) spans 78–89 (PSPVSSSESPPV). Basic and acidic residues predominate over residues 94-113 (SDDKVLPKGSHDSNDVRLGE). Residues 114–124 (ETNSGKSSNVS) show a composition bias toward polar residues. A GDS motif motif is present at residues 211 to 213 (GDS). The segment at 438 to 467 (RHDGHPGPYRSPDPKKITKRGPDGQPPPQD) is disordered. Positions 449 to 459 (PDPKKITKRGP) are enriched in basic and acidic residues. Positions 467 to 481 (DCLHWCMPGPVDTWN) match the DCXHWCLPGXXDXWN motif motif.

It belongs to the PC-esterase family. TBL subfamily. As to expression, expressed in roots, cauline leaves and flowers.

It is found in the membrane. May act as a bridging protein that binds pectin and other cell wall polysaccharides. Probably involved in maintaining esterification of pectins. May be involved in the specific O-acetylation of cell wall polymers. The protein is Protein YLS7 (YLS7) of Arabidopsis thaliana (Mouse-ear cress).